A 247-amino-acid chain; its full sequence is ATP synthase subunit a, chloroplastic (247 aa).

The next 5 helical transmembrane spans lie at 38–58 (QVLITSWVVIAILLGSVTIAV), 95–115 (VPFIGTMFLFIFVSNWSGALF), 134–154 (INTTVALALPTSVAYFYAGLT), 199–219 (LVVVVLVSLVPSVVPIPVMFL), and 220–240 (GLFTSGIQALIFATLAAAYIG).

This sequence belongs to the ATPase A chain family. F-type ATPases have 2 components, CF(1) - the catalytic core - and CF(0) - the membrane proton channel. CF(1) has five subunits: alpha(3), beta(3), gamma(1), delta(1), epsilon(1). CF(0) has four main subunits: a, b, b' and c.

The protein localises to the plastid. It localises to the chloroplast thylakoid membrane. In terms of biological role, key component of the proton channel; it plays a direct role in the translocation of protons across the membrane. In Piper cenocladum (Ant piper), this protein is ATP synthase subunit a, chloroplastic.